The sequence spans 141 residues: Nucleoside diphosphate kinase (141 aa).

ATP contacts are provided by lysine 11, phenylalanine 59, arginine 87, threonine 93, arginine 104, and asparagine 114. The Pros-phosphohistidine intermediate role is filled by histidine 117.

Belongs to the NDK family. In terms of assembly, homotetramer. Mg(2+) serves as cofactor.

It localises to the cytoplasm. The enzyme catalyses a 2'-deoxyribonucleoside 5'-diphosphate + ATP = a 2'-deoxyribonucleoside 5'-triphosphate + ADP. The catalysed reaction is a ribonucleoside 5'-diphosphate + ATP = a ribonucleoside 5'-triphosphate + ADP. Functionally, major role in the synthesis of nucleoside triphosphates other than ATP. The ATP gamma phosphate is transferred to the NDP beta phosphate via a ping-pong mechanism, using a phosphorylated active-site intermediate. The sequence is that of Nucleoside diphosphate kinase from Photorhabdus laumondii subsp. laumondii (strain DSM 15139 / CIP 105565 / TT01) (Photorhabdus luminescens subsp. laumondii).